We begin with the raw amino-acid sequence, 232 residues long: Chaperone protein CssC (232 aa).

A signal peptide spans 1 to 20 (MKSKLIILLTLVPFSSFSTG).

Belongs to the periplasmic pilus chaperone family.

It localises to the periplasm. Its function is as follows. Involved in the biogenesis of the CS6 fimbria. This is Chaperone protein CssC (cssC) from Escherichia coli.